Consider the following 83-residue polypeptide: Cell division topological specificity factor (83 aa).

This sequence belongs to the MinE family.

Prevents the cell division inhibition by proteins MinC and MinD at internal division sites while permitting inhibition at polar sites. This ensures cell division at the proper site by restricting the formation of a division septum at the midpoint of the long axis of the cell. The protein is Cell division topological specificity factor of Buchnera aphidicola subsp. Schizaphis graminum (strain Sg).